Reading from the N-terminus, the 147-residue chain is Hemoglobin subunit beta (147 aa).

Valine 2 carries the N-acetylvaline modification. The 145-residue stretch at 3–147 (HLTPEEKSAV…VANALAHKYH (145 aa)) folds into the Globin domain. Threonine 13 is subject to Phosphothreonine. The residue at position 45 (serine 45) is a Phosphoserine. Lysine 60 bears the N6-acetyllysine mark. Histidine 64 is a binding site for heme b. Lysine 83 bears the N6-acetyllysine mark. Histidine 93 serves as a coordination point for heme b. At cysteine 94 the chain carries S-nitrosocysteine. At lysine 145 the chain carries N6-acetyllysine.

This sequence belongs to the globin family. In terms of assembly, heterotetramer of two alpha chains and two beta chains. As to expression, red blood cells.

Its function is as follows. Involved in oxygen transport from the lung to the various peripheral tissues. This is Hemoglobin subunit beta (HBB) from Gorilla gorilla gorilla (Western lowland gorilla).